The chain runs to 30 residues: U10-ctenitoxin-Co1b (30 aa).

2 cysteine pairs are disulfide-bonded: Cys-2–Cys-17 and Cys-9–Cys-22.

As to expression, expressed by the venom gland.

The protein localises to the secreted. In terms of biological role, antagonist of L-type calcium channels (Cav1/CACNA1). The chain is U10-ctenitoxin-Co1b from Ctenus ornatus (Brazilian spider).